The sequence spans 78 residues: Gas vesicle protein A (78 aa).

Belongs to the gas vesicle GvpA family. In terms of assembly, the gas vesicle shell is 2 nm thick and consists of a single layer of this protein. It forms helical ribs nearly perpendicular to the long axis of the vesicle.

The protein localises to the gas vesicle shell. In terms of biological role, gas vesicles are hollow, gas filled proteinaceous nanostructures found in some microorganisms. During planktonic growth they allow positioning of the organism at a favorable depth for light or nutrient acquisition. GvpA forms the protein shell. The sequence is that of Gas vesicle protein A from Halorubrum vacuolatum (Natronobacterium vacuolatum).